The primary structure comprises 179 residues: Large ribosomal subunit protein uL6 (179 aa).

Belongs to the universal ribosomal protein uL6 family. In terms of assembly, part of the 50S ribosomal subunit.

In terms of biological role, this protein binds to the 23S rRNA, and is important in its secondary structure. It is located near the subunit interface in the base of the L7/L12 stalk, and near the tRNA binding site of the peptidyltransferase center. The protein is Large ribosomal subunit protein uL6 of Desulfovibrio desulfuricans (strain ATCC 27774 / DSM 6949 / MB).